A 332-amino-acid polypeptide reads, in one-letter code: Fructose-1,6-bisphosphatase class 1 (332 aa).

Glu-93, Asp-113, Leu-115, and Asp-116 together coordinate Mg(2+). Residues 116–119 (DGSS), Asn-209, Tyr-235, and Lys-272 each bind substrate. Residue Glu-278 participates in Mg(2+) binding.

Belongs to the FBPase class 1 family. Homotetramer. The cofactor is Mg(2+).

The protein resides in the cytoplasm. It carries out the reaction beta-D-fructose 1,6-bisphosphate + H2O = beta-D-fructose 6-phosphate + phosphate. Its pathway is carbohydrate biosynthesis; gluconeogenesis. The sequence is that of Fructose-1,6-bisphosphatase class 1 from Syntrophus aciditrophicus (strain SB).